Consider the following 179-residue polypeptide: Large ribosomal subunit protein uL6 (179 aa).

Belongs to the universal ribosomal protein uL6 family. In terms of assembly, part of the 50S ribosomal subunit.

This protein binds to the 23S rRNA, and is important in its secondary structure. It is located near the subunit interface in the base of the L7/L12 stalk, and near the tRNA binding site of the peptidyltransferase center. In Pelodictyon phaeoclathratiforme (strain DSM 5477 / BU-1), this protein is Large ribosomal subunit protein uL6.